Here is a 1716-residue protein sequence, read N- to C-terminus: MLASKHTPWRRLQGISFGMYSAEELKKLSVKSITNPRYVDSLGNPSADGLYDLALGPADSKEVCSTCVQDFNNCSGHLGHIDLPLTVYNPLLFDKLYLLLRGSCLNCHMLTCPRAAIHLLVCQLKVLDVGALQAVYELERILSRFLEETSDPSAFEIQEELEEYTSKILQNNLLGSQGAHVKNVCESRSKLVAHFWKTHMAAKRCPHCKTGRSVVRKEHNSKLTITYPAMVHKKSGQKDAELPEGAPAAPGIDEAQMGKRGYLTPSSAQEHLFAIWKNEGFFLNYLFSGLDDIGPESSFNPSMFFLDFIVVPPSRYRPINRLGDQMFTNGQTVNLQAVMKDAVLIRKLLAVMAQEQKLPCEMTEITIDKENDSSGAIDRSFLSLLPGQSLTDKLYNIWIRLQSHVNIVFDSDMDKLMLEKYPGIRQILEKKEGLFRKHMMGKRVDYAARSVICPDMYINTNEIGIPMVFATKLTYPQPVTPWNVQELRQAVINGPNVHPGASMVINEDGSRTALSAVDATQREAVAKQLLTPSTGIPKPQGAKVVCRHVKNGDILLLNRQPTLHRPSIQAHRAHILPEEKVLRLHYANCKAYNADFDGDEMNAHFPQSELGRAEAYVLACTDQQYLVPKDGQPLAGLIQDHMVSGANMTIRGCFFTREQYMELVYRGLTDKVGRVKLFPPAILKPFPLWTGKQVVSTLLINIIPEDYTPLNLTGKAKIGSKAWVKEKPRPVPDFDPDSMCESQVIIREGELLCGVLDKAHYGSSAYGLVHCCYEIYGGETSGRVLTCLARLFTAYLQLYRGFTLGVEDILVKPNADVMRQRIIEESTQCGPRAVRAALNLPEAASCDEIQGKWQDAIWRKDQRDFNMIDMKFKEEVNHYSNEINKACMPFGLHRQFPENNLQMMVQSGAKGSTVNTMQISCLLGQIELEGRRPPLMASGKSLPCFEPYEFTPRAGGFVTGRFLTGIRPPEFFFHCMAGREGLVDTAVKTSRSGYLQRCIIKHLEGLVIQYDLTVRDSDGSVVQFLYGEDGLDIPKTQFLQPKQFPFLASNYEVIMKSKHLHEVLSRADPQKVLRHFRAIKKWHHRHSSALLRKGAFLSFSQKIQAAVKALNLEGKTQNGRSPETQQMLQMWHELDEQSRRKYQKRAAPCPDPSLSVWRPDIHFASVSETFEKKIDDYSQEWAAQAEKSHNRSELSLDRLRTLLQLKWQRSLCDPGEAVGLLAAQSIGEPSTQMTLNTFHFAGRGEMNVTLGIPRLREILMVASANIKTPMMSVPVFNTKKALRRVKSLKKQLTRVCLGEVLQKVDIQESFCMGEKQNKFRVYELRFQFLPHAYYQQEKCLRPEDILHFMETRFFKLLMEAIKKKNSKASAFRSVNTRRATQKDLDDTEDSGRNRREEERDEEEEGNIVDAEAEEGDADASDTKRKEKQEEEVDYESEEEGEEEEEEDVQEEENIKGEGAHQTHEPDEEEGSGLEEESSQNPPCRHSRPQGAEAMERRIQAVRESHSFIEDYQYDTEESLWCQVTVKLPLMKINFDMSSLVVSLAHNAIVYTTKGITRCLLNETINSKNEKEFVLNTEGINLPELFKYSEVLDLRRLYSNDIHAVANTYGIEAALRVIEKEIKDVFAVYGIAVDPRHLSLVADYMCFEGVYKPLNRFGIQSSSSPLQQMTFETSFQFLKQATMMGSHDELKSPSACLVVGKVVKGGTGLFELKQPLR.

Zn(2+) contacts are provided by cysteine 64, cysteine 67, cysteine 74, histidine 77, cysteine 104, and cysteine 107. Residues 110–201 (LTCPRAAIHL…VAHFWKTHMA (92 aa)) are clamp. Cysteine 205 and cysteine 208 together coordinate Zn(2+). The segment at 327–433 (FTNGQTVNLQ…IRQILEKKEG (107 aa)) is clamp. Positions 410–423 (DSDMDKLMLEKYPG) are rudder. DNA is bound by residues lysine 431, arginine 436, and arginine 443. An involved in RRN3 binding to Pol I complex region spans residues 475-549 (YPQPVTPWNV…QGAKVVCRHV (75 aa)). Arginine 559 is a binding site for RNA. Residues aspartate 595, aspartate 597, and aspartate 599 each contribute to the Mg(2+) site. Aspartate 599 serves as a coordination point for RNA. A funnel region spans residues 812 to 890 (KPNADVMRQR…NEINKACMPF (79 aa)). The segment at 967–1008 (RPPEFFFHCMAGREGLVDTAVKTSRSGYLQRCIIKHLEGLVI) is bridging helix. The interval 1067-1162 (ADPQKVLRHF…SLSVWRPDIH (96 aa)) is mediates the interaction with TOP2A. Residues 1214–1255 (PGEAVGLLAAQSIGEPSTQMTLNTFHFAGRGEMNVTLGIPRL) form a trigger loop region. Residue arginine 1256 coordinates DNA. Residues 1368–1493 (ASAFRSVNTR…RHSRPQGAEA (126 aa)) are disordered. A compositionally biased stretch (basic and acidic residues) spans 1380–1397 (TQKDLDDTEDSGRNRREE). 2 stretches are compositionally biased toward acidic residues: residues 1398–1419 (ERDE…DADA) and 1429–1451 (EEEV…VQEE). Residues 1452–1464 (ENIKGEGAHQTHE) are compositionally biased toward basic and acidic residues. The span at 1465-1477 (PDEEEGSGLEEES) shows a compositional bias: acidic residues.

This sequence belongs to the RNA polymerase beta' chain family. Component of the RNA polymerase I (Pol I) complex consisting of 13 subunits: a ten-subunit catalytic core composed of POLR1A/RPA1, POLR1B/RPA2, POLR1C/RPAC1, POLR1D/RPAC2, POLR1H/RPA12, POLR2E/RPABC1, POLR2F/RPABC2, POLR2H/RPABC3, POLR2K/RPABC4 and POLR2L/RPABC5; a mobile stalk subunit POLR1F/RPA43 protruding from the core and additional subunits homologous to general transcription factors POLR1E/RPA49 and POLR1G/RPA34. Part of Pol I pre-initiation complex (PIC), in which Pol I core assembles with RRN3 and promoter-bound UTBF and SL1/TIF-IB complex. Interacts (via dock II domain) with TOP2A; this interaction may assist Pol I transcription initiation by releasing supercoils occurring during DNA unwinding. Interacts with CAVIN1; this interaction induces the dissociation of Pol I complex paused at rDNA terminator sequences. Interacts with MYO1C. Interacts with ERBB2. Interacts with DDX11. Interacts with RECQL5. Mg(2+) is required as a cofactor. Phosphorylated.

It is found in the nucleus. Its subcellular location is the nucleolus. It localises to the chromosome. It carries out the reaction RNA(n) + a ribonucleoside 5'-triphosphate = RNA(n+1) + diphosphate. In terms of biological role, catalytic core component of RNA polymerase I (Pol I), a DNA-dependent RNA polymerase which synthesizes ribosomal RNA precursors using the four ribonucleoside triphosphates as substrates. Transcribes 47S pre-rRNAs from multicopy rRNA gene clusters, giving rise to 5.8S, 18S and 28S ribosomal RNAs. Pol I-mediated transcription cycle proceeds through transcription initiation, transcription elongation and transcription termination stages. During transcription initiation, Pol I pre-initiation complex (PIC) is recruited by the selectivity factor 1 (SL1/TIF-IB) complex bound to the core promoter that precedes an rDNA repeat unit. The PIC assembly bends the promoter favoring the formation of the transcription bubble and promoter escape. Once the polymerase has escaped from the promoter it enters the elongation phase during which RNA is actively polymerized, based on complementarity with the template DNA strand. Highly processive, assembles in structures referred to as 'Miller trees' where many elongating Pol I complexes queue and transcribe the same rDNA coding regions. At terminator sequences downstream of the rDNA gene, PTRF interacts with Pol I and halts Pol I transcription leading to the release of the RNA transcript and polymerase from the DNA. Forms Pol I active center together with the second largest subunit POLR1B/RPA2. Appends one nucleotide at a time to the 3' end of the nascent RNA, with POLR1A/RPA1 contributing a Mg(2+)-coordinating DxDGD motif, and POLR1B/RPA2 participating in the coordination of a second Mg(2+) ion and providing lysine residues believed to facilitate Watson-Crick base pairing between the incoming nucleotide and the template base. Typically, Mg(2+) ions direct a 5' nucleoside triphosphate to form a phosphodiester bond with the 3' hydroxyl of the preceding nucleotide of the nascent RNA, with the elimination of pyrophosphate. Has proofreading activity: Pauses and backtracks to allow the cleavage of a missincorporated nucleotide via POLR1H/RPA12. High Pol I processivity is associated with decreased transcription fidelity. The chain is DNA-directed RNA polymerase I subunit RPA1 from Rattus norvegicus (Rat).